The chain runs to 135 residues: Large ribosomal subunit protein uL16c (135 aa).

Belongs to the universal ribosomal protein uL16 family. As to quaternary structure, part of the 50S ribosomal subunit.

The protein localises to the plastid. The protein resides in the chloroplast. In Drimys granadensis, this protein is Large ribosomal subunit protein uL16c.